Reading from the N-terminus, the 409-residue chain is Pleckstrin homology domain-containing family O member 1 (409 aa).

Residues 1–20 form a disordered region; it reads MMKKNNSTKRGPQDGNHQCA. In terms of domain architecture, PH spans 21 to 132; it reads PPEKVGWVRK…WINALNSAIT (112 aa). The interval 133 to 193 is interaction with capping proteins (CPs); it reads RAKNRVLDEV…MLTLDLIQEE (61 aa). The segment at 136–308 is interaction with ATM, CKIP, IFP35 and NMI; the sequence is NRVLDEVTVE…PHAPGQLSRI (173 aa). Disordered stretches follow at residues 218-304, 325-350, and 390-409; these read LAGS…APGQ, EVQG…ESEQ, and TPDS…KSLM. Residues serine 227 and serine 271 each carry the phosphoserine modification. A negative regulator of AP-1 activity region spans residues 308–409; it reads IQDLVARKLE…QHSQYRKSLM (102 aa). Over residues 331–340 the composition is skewed to basic and acidic residues; sequence DGKRKAKEPP. Serine 342 bears the Phosphoserine mark. Residues 390-402 show a composition bias toward polar residues; that stretch reads TPDSHLRQTTQHS.

As to quaternary structure, heterodimer or homodimer. Interacts with CK2 and actin capping subunits (capping protein CP-alpha and CP-beta). CKIP1 and CK2 together inhibit the activity of actin capping protein at the barbed ends of actin filaments. Interacts with ATM, IFP35, JUN, JUND, NMI and PI3K. Interacts with AKT1, AKT2 and AKT3 (each isozyme of PKB), PtdIns(3,5)P2, PtdIns(4,5)P2 and PtdIns(3,4,5)P2. Post-translationally, C-terminal fragments could be released during apoptosis via caspase-3-dependent cleavage.

Its subcellular location is the membrane. The protein resides in the nucleus. The protein localises to the cytoplasm. Functionally, plays a role in the regulation of the actin cytoskeleton through its interactions with actin capping protein (CP). May function to target CK2 to the plasma membrane thereby serving as an adapter to facilitate the phosphorylation of CP by protein kinase 2 (CK2). Appears to target ATM to the plasma membrane. Also implicated in PI3K-regulated muscle differentiation, the regulation of AP-1 activity (plasma membrane bound AP-1 regulator that translocates to the nucleus) and the promotion of apoptosis induced by tumor necrosis factor TNF. When bound to PKB, it inhibits it probably by decreasing PKB level of phosphorylation. The chain is Pleckstrin homology domain-containing family O member 1 (PLEKHO1) from Bos taurus (Bovine).